The sequence spans 513 residues: Probable mannosyl-oligosaccharide alpha-1,2-mannosidase 1B (513 aa).

An N-terminal signal peptide occupies residues 1 to 21; that stretch reads MHLSSLSLSLTALAIVSPSAA. N-linked (GlcNAc...) asparagine glycans are attached at residues Asn97, Asn117, Asn184, Asn251, Asn322, Asn348, and Asn368. Cys334 and Cys363 are oxidised to a cystine. Glu377 serves as the catalytic Proton donor. Thr503 provides a ligand contact to Ca(2+).

The protein belongs to the glycosyl hydrolase 47 family. In terms of assembly, monomer. It depends on Ca(2+) as a cofactor. Mg(2+) serves as cofactor.

Its subcellular location is the cytoplasmic vesicle lumen. The catalysed reaction is N(4)-(alpha-D-Man-(1-&gt;2)-alpha-D-Man-(1-&gt;2)-alpha-D-Man-(1-&gt;3)-[alpha-D-Man-(1-&gt;2)-alpha-D-Man-(1-&gt;3)-[alpha-D-Man-(1-&gt;2)-alpha-D-Man-(1-&gt;6)]-alpha-D-Man-(1-&gt;6)]-beta-D-Man-(1-&gt;4)-beta-D-GlcNAc-(1-&gt;4)-beta-D-GlcNAc)-L-asparaginyl-[protein] (N-glucan mannose isomer 9A1,2,3B1,2,3) + 4 H2O = N(4)-(alpha-D-Man-(1-&gt;3)-[alpha-D-Man-(1-&gt;3)-[alpha-D-Man-(1-&gt;6)]-alpha-D-Man-(1-&gt;6)]-beta-D-Man-(1-&gt;4)-beta-D-GlcNAc-(1-&gt;4)-beta-D-GlcNAc)-L-asparaginyl-[protein] (N-glucan mannose isomer 5A1,2) + 4 beta-D-mannose. The enzyme catalyses N(4)-(alpha-D-Man-(1-&gt;2)-alpha-D-Man-(1-&gt;2)-alpha-D-Man-(1-&gt;3)-[alpha-D-Man-(1-&gt;3)-[alpha-D-Man-(1-&gt;2)-alpha-D-Man-(1-&gt;6)]-alpha-D-Man-(1-&gt;6)]-beta-D-Man-(1-&gt;4)-beta-D-GlcNAc-(1-&gt;4)-beta-D-GlcNAc)-L-asparaginyl-[protein] (N-glucan mannose isomer 8A1,2,3B1,3) + 3 H2O = N(4)-(alpha-D-Man-(1-&gt;3)-[alpha-D-Man-(1-&gt;3)-[alpha-D-Man-(1-&gt;6)]-alpha-D-Man-(1-&gt;6)]-beta-D-Man-(1-&gt;4)-beta-D-GlcNAc-(1-&gt;4)-beta-D-GlcNAc)-L-asparaginyl-[protein] (N-glucan mannose isomer 5A1,2) + 3 beta-D-mannose. Its pathway is protein modification; protein glycosylation. Its function is as follows. Involved in the maturation of Asn-linked oligosaccharides. Progressively trims alpha-1,2-linked mannose residues from Man(9)GlcNAc(2) to produce Man(5)GlcNAc(2). This chain is Probable mannosyl-oligosaccharide alpha-1,2-mannosidase 1B (mns1B), found in Aspergillus niger (strain ATCC MYA-4892 / CBS 513.88 / FGSC A1513).